A 190-amino-acid polypeptide reads, in one-letter code: Adenine phosphoribosyltransferase (190 aa).

It belongs to the purine/pyrimidine phosphoribosyltransferase family. In terms of assembly, homodimer.

It localises to the cytoplasm. The enzyme catalyses AMP + diphosphate = 5-phospho-alpha-D-ribose 1-diphosphate + adenine. It participates in purine metabolism; AMP biosynthesis via salvage pathway; AMP from adenine: step 1/1. In terms of biological role, catalyzes a salvage reaction resulting in the formation of AMP, that is energically less costly than de novo synthesis. The sequence is that of Adenine phosphoribosyltransferase from Cupriavidus taiwanensis (strain DSM 17343 / BCRC 17206 / CCUG 44338 / CIP 107171 / LMG 19424 / R1) (Ralstonia taiwanensis (strain LMG 19424)).